We begin with the raw amino-acid sequence, 302 residues long: L-glutamate/L-aspartate-binding protein (302 aa).

A signal peptide spans 1–23; it reads MRIAPSLLSTAIVAALLSAPVVA.

Belongs to the bacterial solute-binding protein 3 family.

It localises to the periplasm. Binds L-glutamate and L-aspartate. This is L-glutamate/L-aspartate-binding protein from Pseudomonas aeruginosa (strain ATCC 15692 / DSM 22644 / CIP 104116 / JCM 14847 / LMG 12228 / 1C / PRS 101 / PAO1).